The chain runs to 727 residues: Adhesion G protein-coupled receptor L4 (727 aa).

The signal sequence occupies residues Met1–Phe19. The Extracellular segment spans residues Leu20 to Ile467. Positions Asp52–Glu90 constitute an EGF-like 1; calcium-binding domain. 6 cysteine pairs are disulfide-bonded: Cys56–Cys69, Cys63–Cys78, Cys106–Cys118, Cys112–Cys127, Cys408–Cys438, and Cys426–Cys440. The 38-residue stretch at Asp102 to Pro139 folds into the EGF-like 2; calcium-binding domain. Residues Thr282 to Asn456 form the GAIN-B domain. Residues Cys408 to Asn456 form a GPS region. The helical transmembrane segment at Thr468–Phe488 threads the bilayer. The Cytoplasmic segment spans residues Phe489–Arg496. A helical membrane pass occupies residues Thr497–Gly517. Residues Ile518–His535 are Extracellular-facing. A helical membrane pass occupies residues Tyr536–Val556. Over Val557–Arg568 the chain is Cytoplasmic. The chain crosses the membrane as a helical span at residues Asn569 to Gly589. The Extracellular segment spans residues Tyr590–Trp609. Residues Ser610–Ile630 traverse the membrane as a helical segment. Residues Tyr631 to Ala654 lie on the Cytoplasmic side of the membrane. The chain crosses the membrane as a helical span at residues Arg655–Ile675. The Extracellular segment spans residues Leu676–Thr682. The helical transmembrane segment at Ala683–Val703 threads the bilayer.

Belongs to the G-protein coupled receptor 2 family. Adhesion G-protein coupled receptor (ADGR) subfamily. As to quaternary structure, heterodimer of 2 chains generated by proteolytic processing; the large extracellular N-terminal fragment and the membrane-bound C-terminal fragment predominantly remain associated and non-covalently linked. Post-translationally, autoproteolytically processed at the GPS region of the GAIN-B domain; this cleavage modulates receptor activity.

Its subcellular location is the cell membrane. Orphan receptor that plays a role in vessel formation. This chain is Adhesion G protein-coupled receptor L4, found in Danio rerio (Zebrafish).